Reading from the N-terminus, the 691-residue chain is Mediator of RNA polymerase II transcription subunit 17 (691 aa).

Residues 158–185 are a coiled coil; that stretch reads KLESFDAAANKLLQSAQRLEEDIAAETK.

It belongs to the Mediator complex subunit 17 family. As to quaternary structure, component of the Mediator complex.

The protein resides in the nucleus. Its function is as follows. Component of the Mediator complex, a coactivator involved in the regulated transcription of nearly all RNA polymerase II-dependent genes. Mediator functions as a bridge to convey information from gene-specific regulatory proteins to the basal RNA polymerase II transcription machinery. Mediator is recruited to promoters by direct interactions with regulatory proteins and serves as a scaffold for the assembly of a functional preinitiation complex with RNA polymerase II and the general transcription factors. This Coccidioides immitis (strain RS) (Valley fever fungus) protein is Mediator of RNA polymerase II transcription subunit 17 (SRB4).